Consider the following 431-residue polypeptide: Tryptophan synthase beta chain (431 aa).

Lysine 109 is subject to N6-(pyridoxal phosphate)lysine.

It belongs to the TrpB family. As to quaternary structure, tetramer of two alpha and two beta chains. Pyridoxal 5'-phosphate serves as cofactor.

The catalysed reaction is (1S,2R)-1-C-(indol-3-yl)glycerol 3-phosphate + L-serine = D-glyceraldehyde 3-phosphate + L-tryptophan + H2O. The protein operates within amino-acid biosynthesis; L-tryptophan biosynthesis; L-tryptophan from chorismate: step 5/5. The beta subunit is responsible for the synthesis of L-tryptophan from indole and L-serine. The sequence is that of Tryptophan synthase beta chain from Deinococcus radiodurans (strain ATCC 13939 / DSM 20539 / JCM 16871 / CCUG 27074 / LMG 4051 / NBRC 15346 / NCIMB 9279 / VKM B-1422 / R1).